A 168-amino-acid polypeptide reads, in one-letter code: Protein OPG162 (168 aa).

Residues 1–14 are Intravirion-facing; the sequence is MKSLNRQTVSRFKK. Residues 15 to 37 traverse the membrane as a helical segment; sequence LSVPAAIMMILSTIISGIGTFLH. At 38 to 168 the chain is on the virion surface side; sequence YKEELMPSAC…SVLCVKRFYK (131 aa). The 110-residue stretch at 54–163 folds into the C-type lectin domain; the sequence is YDKHCYLDTN…CKSTQSVLCV (110 aa). 2 cysteine pairs are disulfide-bonded: C75/C162 and C141/C154. N133 is a glycosylation site (N-linked (GlcNAc...) asparagine; by host).

The protein belongs to the orthopoxvirus OPG162 protein family. As to quaternary structure, interacts with protein OPG161. Interacts with protein OPG164. Interacts with protein OPG190.

It localises to the virion membrane. The protein resides in the host Golgi apparatus. Functionally, forms a complex with OPG162 and OPG190 to coordinate the incorporation of OPG164 into wrapped enveloped virion (EV) membranes and, subsequently, the production of actin tails. Therefore plays an essential role in efficient cell-to-cell spread of viral particles. In Variola virus (isolate Human/India/Ind3/1967) (VARV), this protein is Protein OPG162 (OPG162).